Reading from the N-terminus, the 427-residue chain is Glutamate-1-semialdehyde 2,1-aminomutase (427 aa).

Position 265 is an N6-(pyridoxal phosphate)lysine (lysine 265).

Belongs to the class-III pyridoxal-phosphate-dependent aminotransferase family. HemL subfamily. Homodimer. The cofactor is pyridoxal 5'-phosphate.

The protein resides in the cytoplasm. The catalysed reaction is (S)-4-amino-5-oxopentanoate = 5-aminolevulinate. It functions in the pathway porphyrin-containing compound metabolism; protoporphyrin-IX biosynthesis; 5-aminolevulinate from L-glutamyl-tRNA(Glu): step 2/2. The sequence is that of Glutamate-1-semialdehyde 2,1-aminomutase from Pseudomonas aeruginosa (strain UCBPP-PA14).